The following is a 417-amino-acid chain: Serine hydroxymethyltransferase (417 aa).

(6S)-5,6,7,8-tetrahydrofolate-binding positions include Leu-112 and 116–118 (GHL). At Lys-221 the chain carries N6-(pyridoxal phosphate)lysine. Glu-247 provides a ligand contact to (6S)-5,6,7,8-tetrahydrofolate.

It belongs to the SHMT family. As to quaternary structure, homodimer. Requires pyridoxal 5'-phosphate as cofactor.

It localises to the cytoplasm. It carries out the reaction (6R)-5,10-methylene-5,6,7,8-tetrahydrofolate + glycine + H2O = (6S)-5,6,7,8-tetrahydrofolate + L-serine. Its pathway is one-carbon metabolism; tetrahydrofolate interconversion. It functions in the pathway amino-acid biosynthesis; glycine biosynthesis; glycine from L-serine: step 1/1. Functionally, catalyzes the reversible interconversion of serine and glycine with tetrahydrofolate (THF) serving as the one-carbon carrier. This reaction serves as the major source of one-carbon groups required for the biosynthesis of purines, thymidylate, methionine, and other important biomolecules. Also exhibits THF-independent aldolase activity toward beta-hydroxyamino acids, producing glycine and aldehydes, via a retro-aldol mechanism. The protein is Serine hydroxymethyltransferase of Borreliella burgdorferi (strain ATCC 35210 / DSM 4680 / CIP 102532 / B31) (Borrelia burgdorferi).